Reading from the N-terminus, the 271-residue chain is Shikimate dehydrogenase (NADP(+)) (271 aa).

Shikimate contacts are provided by residues 15–17 (SKS) and Thr-62. The Proton acceptor role is filled by Lys-66. Glu-78 is a binding site for NADP(+). Positions 87 and 103 each coordinate shikimate. NADP(+) is bound by residues 127 to 131 (GAGGA), 151 to 156 (NRTQAK), and Met-214. Tyr-216 provides a ligand contact to shikimate. Gly-238 lines the NADP(+) pocket.

The protein belongs to the shikimate dehydrogenase family. As to quaternary structure, homodimer.

It catalyses the reaction shikimate + NADP(+) = 3-dehydroshikimate + NADPH + H(+). The protein operates within metabolic intermediate biosynthesis; chorismate biosynthesis; chorismate from D-erythrose 4-phosphate and phosphoenolpyruvate: step 4/7. Functionally, involved in the biosynthesis of the chorismate, which leads to the biosynthesis of aromatic amino acids. Catalyzes the reversible NADPH linked reduction of 3-dehydroshikimate (DHSA) to yield shikimate (SA). The chain is Shikimate dehydrogenase (NADP(+)) from Shewanella pealeana (strain ATCC 700345 / ANG-SQ1).